Here is a 350-residue protein sequence, read N- to C-terminus: C5a anaphylatoxin chemotactic receptor 1 (350 aa).

Residues 1–37 are Extracellular-facing; the sequence is MDSFDYTTPDYGHYDDKDTLDLNTPVDKTSNTLRVPD. Residues 10–18 are required for CHIPS binding; the sequence is DYGHYDDKD. 2 positions are modified to sulfotyrosine: Tyr11 and Tyr14. The segment at 21-30 is involved in C5a binding; that stretch reads DLNTPVDKTS. Residues 38–64 form a helical membrane-spanning segment; that stretch reads ILALVIFAVVFLVGVLGNALVVWVTAF. The Cytoplasmic segment spans residues 65-69; it reads EAKRT. The chain crosses the membrane as a helical span at residues 70 to 93; that stretch reads INAIWFLNLAVADFLSCLALPILF. At 94–110 the chain is on the extracellular side; sequence TSIVQHHHWPFGGAACS. The cysteines at positions 109 and 188 are disulfide-linked. Residues 111–132 form a helical membrane-spanning segment; the sequence is ILPSLILLNMYASILLLATISA. Topologically, residues 133-153 are cytoplasmic; sequence DRFLLVFKPIWCQNFRGAGLA. A helical transmembrane segment spans residues 154–174; sequence WIACAVAWGLALLLTIPSFLY. Residues 175 to 200 are Extracellular-facing; it reads RVVREEYFPPKVLCGVDYSHDKRRER. A helical transmembrane segment spans residues 201–226; that stretch reads AVAIVRLVLGFLWPLLTLMICYTFIL. The Cytoplasmic segment spans residues 227–242; sequence LRTWSRRATRSTKTLK. Residues 243 to 265 traverse the membrane as a helical segment; that stretch reads VVVAVVASFFIFWLPYQVTGIMM. At 266–282 the chain is on the extracellular side; that stretch reads SFLEPSSPTFRLLKKLD. Residues 283-303 form a helical membrane-spanning segment; that stretch reads SLCVSFAYINCCINPIIYVVA. The Cytoplasmic portion of the chain corresponds to 304-350; the sequence is GQGFQGRLQKSLPSLLRNVLTEESVVRESKSFARSTVDTMADKTQAV. Phosphoserine occurs at positions 314, 317, 327, 332, 334, and 338.

It belongs to the G-protein coupled receptor 1 family. In terms of assembly, homodimer. May also form higher-order oligomers. Interacts (when phosphorylated) with ARRB1 and ARRB2; the interaction is associated with internalization of C5aR. Interacts (via N-terminal domain) with S.aureus chemotaxis inhibitory protein (CHIPS); the interaction blocks the receptor and may thus inhibit the immune response. In terms of processing, sulfation plays a critical role in the association of C5aR with C5a, but no significant role in the ability of the receptor to transduce a signal and mobilize calcium in response to a small peptide agonist. Sulfation at Tyr-14 is important for CHIPS binding. Post-translationally, phosphorylated on serine residues in response to C5a binding, resulting in internalization of the receptor and short-term desensitization to C5a.

The protein localises to the cell membrane. It localises to the cytoplasmic vesicle. Functionally, receptor for the chemotactic and inflammatory peptide anaphylatoxin C5a. The ligand interacts with at least two sites on the receptor: a high-affinity site on the extracellular N-terminus, and a second site in the transmembrane region which activates downstream signaling events. Receptor activation stimulates chemotaxis, granule enzyme release, intracellular calcium release and superoxide anion production. The protein is C5a anaphylatoxin chemotactic receptor 1 (C5AR1) of Pan troglodytes (Chimpanzee).